A 137-amino-acid polypeptide reads, in one-letter code: Ribosome-binding factor A (137 aa).

It belongs to the RbfA family. In terms of assembly, monomer. Binds 30S ribosomal subunits, but not 50S ribosomal subunits or 70S ribosomes.

The protein resides in the cytoplasm. Functionally, one of several proteins that assist in the late maturation steps of the functional core of the 30S ribosomal subunit. Associates with free 30S ribosomal subunits (but not with 30S subunits that are part of 70S ribosomes or polysomes). Required for efficient processing of 16S rRNA. May interact with the 5'-terminal helix region of 16S rRNA. The polypeptide is Ribosome-binding factor A (Cereibacter sphaeroides (strain KD131 / KCTC 12085) (Rhodobacter sphaeroides)).